An 875-amino-acid polypeptide reads, in one-letter code: F-box only protein 41 (875 aa).

Disordered stretches follow at residues 85-110 (ESTS…HHHH), 165-194 (SSAC…PSPA), and 347-542 (SSSC…PSRS). The span at 170 to 182 (TPPPGPGPGPCPG) shows a compositional bias: pro residues. The segment covering 183–194 (PASASPASPSPA) has biased composition (low complexity). Residues 209–351 (ALEKLEVDRR…QLQVISSSCG (143 aa)) are a coiled coil. The segment covering 347 to 356 (SSSCGSTPSA) has biased composition (polar residues). Gly residues predominate over residues 359 to 368 (GRGGGGGGAG). Arg360 bears the Omega-N-methylarginine mark. The segment covering 395 to 416 (HGSSPSTGASSRVPAASQSSGC) has biased composition (polar residues). The residue at position 478 (Ser478) is a Phosphoserine. Residue Thr479 is modified to Phosphothreonine. One can recognise an F-box domain in the interval 496–540 (SEAEGPLDAPRPGPAMAGPLSSCRLSARPEGGSGRGRRAERVSPS). Ser762 is subject to Phosphoserine.

As to quaternary structure, directly interacts with SKP1 and CUL1.

Substrate-recognition component of the SCF (SKP1-CUL1-F-box protein)-type E3 ubiquitin ligase complex. The polypeptide is F-box only protein 41 (FBXO41) (Homo sapiens (Human)).